A 76-amino-acid polypeptide reads, in one-letter code: MRKNWTDEEIRVLQNNYEYVDTEIIANFLNRSYHSIKNKAVRLGISKNSVWTEDEDIYLEYFVYETTTILAKLPNF.

It to L.innocua lin1255, lin1742 and lin2600.

This is an uncharacterized protein from Listeria innocua serovar 6a (strain ATCC BAA-680 / CLIP 11262).